The sequence spans 130 residues: Chemotaxis protein CheY-3 (130 aa).

Residues 10 to 127 form the Response regulatory domain; that stretch reads KILIVDDFST…TLKEKLDKIF (118 aa). Aspartate 15, aspartate 16, aspartate 60, and asparagine 62 together coordinate Mg(2+). The residue at position 60 (aspartate 60) is a 4-aspartylphosphate.

As to quaternary structure, interacts with FliM. Requires Mg(2+) as cofactor.

Its subcellular location is the cytoplasm. Acts as a response regulator to control chemotaxis. Involved in the transmission of sensory signals from the chemoreceptors to the flagellar motors. Switches the flagellar rotation by binding to the flagellar motor switch protein FliM. In its active (phosphorylated or acetylated) form, exhibits enhanced binding to a switch component, FliM, at the flagellar motor which induces a change from counterclockwise to clockwise flagellar rotation. The sequence is that of Chemotaxis protein CheY-3 from Vibrio cholerae serotype O1 (strain ATCC 39315 / El Tor Inaba N16961).